The primary structure comprises 277 residues: NLP effector protein Pc109095 (277 aa).

The N-terminal stretch at 1 to 19 (MKFIFAFVLCLAVAQTALG) is a signal peptide. The Hepta-peptide GHRHDWE motif motif lies at 119 to 125 (RSRHLWA). N-linked (GlcNAc...) asparagine glycosylation is present at asparagine 199.

Belongs to the Necrosis inducing protein (NPP1) family.

It is found in the secreted. Secreted effector that contributes strongly to virulence during infection by P.capsici. The sequence is that of NLP effector protein Pc109095 from Phytophthora capsici.